Reading from the N-terminus, the 150-residue chain is 3-hydroxyacyl-[acyl-carrier-protein] dehydratase FabZ (150 aa).

His54 is a catalytic residue.

Belongs to the thioester dehydratase family. FabZ subfamily.

The protein resides in the cytoplasm. It carries out the reaction a (3R)-hydroxyacyl-[ACP] = a (2E)-enoyl-[ACP] + H2O. Involved in unsaturated fatty acids biosynthesis. Catalyzes the dehydration of short chain beta-hydroxyacyl-ACPs and long chain saturated and unsaturated beta-hydroxyacyl-ACPs. In Aliivibrio fischeri (strain ATCC 700601 / ES114) (Vibrio fischeri), this protein is 3-hydroxyacyl-[acyl-carrier-protein] dehydratase FabZ.